Reading from the N-terminus, the 160-residue chain is 2-C-methyl-D-erythritol 2,4-cyclodiphosphate synthase (160 aa).

A divalent metal cation-binding residues include Asp-11 and His-13. 4-CDP-2-C-methyl-D-erythritol 2-phosphate-binding positions include 11 to 13 (DVH) and 37 to 38 (HS). His-45 contributes to the a divalent metal cation binding site. 4-CDP-2-C-methyl-D-erythritol 2-phosphate is bound by residues 59–61 (DIG) and Arg-145.

Belongs to the IspF family. As to quaternary structure, homotrimer. Requires a divalent metal cation as cofactor.

The enzyme catalyses 4-CDP-2-C-methyl-D-erythritol 2-phosphate = 2-C-methyl-D-erythritol 2,4-cyclic diphosphate + CMP. The protein operates within isoprenoid biosynthesis; isopentenyl diphosphate biosynthesis via DXP pathway; isopentenyl diphosphate from 1-deoxy-D-xylulose 5-phosphate: step 4/6. Involved in the biosynthesis of isopentenyl diphosphate (IPP) and dimethylallyl diphosphate (DMAPP), two major building blocks of isoprenoid compounds. Catalyzes the conversion of 4-diphosphocytidyl-2-C-methyl-D-erythritol 2-phosphate (CDP-ME2P) to 2-C-methyl-D-erythritol 2,4-cyclodiphosphate (ME-CPP) with a corresponding release of cytidine 5-monophosphate (CMP). The chain is 2-C-methyl-D-erythritol 2,4-cyclodiphosphate synthase from Neisseria gonorrhoeae (strain ATCC 700825 / FA 1090).